We begin with the raw amino-acid sequence, 279 residues long: HTH-type transcriptional regulator HdfR (279 aa).

The HTH lysR-type domain occupies 1-58 (MDTELLKTFLEVSRTRHFGRAAESLYLTQSAVSFRIRQLENQLGVNLFTRHRNNIRLT). The segment at residues 18 to 37 (FGRAAESLYLTQSAVSFRIR) is a DNA-binding region (H-T-H motif).

It belongs to the LysR transcriptional regulatory family.

Functionally, negatively regulates the transcription of the flagellar master operon flhDC by binding to the upstream region of the operon. This is HTH-type transcriptional regulator HdfR from Escherichia coli O17:K52:H18 (strain UMN026 / ExPEC).